The following is a 372-amino-acid chain: Alanine racemase (372 aa).

Residue lysine 35 is the Proton acceptor; specific for D-alanine of the active site. Lysine 35 is modified (N6-(pyridoxal phosphate)lysine). Residue arginine 143 coordinates substrate. Tyrosine 268 serves as the catalytic Proton acceptor; specific for L-alanine. Methionine 316 is a binding site for substrate.

This sequence belongs to the alanine racemase family. The cofactor is pyridoxal 5'-phosphate.

The enzyme catalyses L-alanine = D-alanine. It participates in amino-acid biosynthesis; D-alanine biosynthesis; D-alanine from L-alanine: step 1/1. Functionally, catalyzes the interconversion of L-alanine and D-alanine. May also act on other amino acids. The sequence is that of Alanine racemase (alr) from Shewanella frigidimarina (strain NCIMB 400).